Reading from the N-terminus, the 480-residue chain is Dihydrolipoyllysine-residue acetyltransferase component 4 of pyruvate dehydrogenase complex, chloroplastic (480 aa).

The N-terminal 53 residues, 1–53, are a transit peptide targeting the chloroplast; the sequence is MAVSSSSFLSTASLTNSKSNISFASSVSPSLRSVVFRSTTPATSHRRSMTVRS. The region spanning 55–133 is the Lipoyl-binding domain; the sequence is IREIFMPALS…AAIGLLAETE (79 aa). K96 carries the post-translational modification N6-lipoyllysine. Disordered regions lie at residues 140–168 and 224–245; these read KSKA…SPAP and AGIA…PVTA. Low complexity predominate over residues 142-156; the sequence is KAASKSSSSVAEAVV. In terms of domain architecture, Peripheral subunit-binding (PSBD) spans 187 to 224; sequence VATPYAKKLAKQHKVDIESVAGTGPFGRITASDVETAA. The segment covering 234–243 has biased composition (pro residues); that stretch reads APPPPPPPPV. H453 is an active-site residue.

Belongs to the 2-oxoacid dehydrogenase family. (R)-lipoate is required as a cofactor.

Its subcellular location is the plastid. The protein resides in the chloroplast stroma. It carries out the reaction N(6)-[(R)-dihydrolipoyl]-L-lysyl-[protein] + acetyl-CoA = N(6)-[(R)-S(8)-acetyldihydrolipoyl]-L-lysyl-[protein] + CoA. Functionally, the pyruvate dehydrogenase complex catalyzes the overall conversion of pyruvate to acetyl-CoA and CO(2). It contains multiple copies of three enzymatic components: pyruvate dehydrogenase (E1), dihydrolipoamide acetyltransferase (E2) and lipoamide dehydrogenase (E3). This chain is Dihydrolipoyllysine-residue acetyltransferase component 4 of pyruvate dehydrogenase complex, chloroplastic (LTA2), found in Arabidopsis thaliana (Mouse-ear cress).